Consider the following 227-residue polypeptide: ATP-dependent dethiobiotin synthetase BioD (227 aa).

ATP is bound at residue 13-18; it reads NIGKTI. A Mg(2+)-binding site is contributed by threonine 17. The active site involves lysine 38. Position 42 (serine 42) interacts with substrate. Residues aspartate 55, 117-120, 177-178, 206-208, and asparagine 213 contribute to the ATP site; these read EGFG, NH, and PFI. Positions 55 and 117 each coordinate Mg(2+).

It belongs to the dethiobiotin synthetase family. In terms of assembly, homodimer. The cofactor is Mg(2+).

Its subcellular location is the cytoplasm. It catalyses the reaction (7R,8S)-7,8-diammoniononanoate + CO2 + ATP = (4R,5S)-dethiobiotin + ADP + phosphate + 3 H(+). Its pathway is cofactor biosynthesis; biotin biosynthesis; biotin from 7,8-diaminononanoate: step 1/2. In terms of biological role, catalyzes a mechanistically unusual reaction, the ATP-dependent insertion of CO2 between the N7 and N8 nitrogen atoms of 7,8-diaminopelargonic acid (DAPA, also called 7,8-diammoniononanoate) to form a ureido ring. In Wigglesworthia glossinidia brevipalpis, this protein is ATP-dependent dethiobiotin synthetase BioD.